Consider the following 686-residue polypeptide: ATP-dependent zinc metalloprotease FTSH 6, chloroplastic (686 aa).

The span at 1 to 14 (MSPTAMSLTTTTSR) shows a compositional bias: polar residues. A disordered region spans residues 1–52 (MSPTAMSLTTTTSRLPICRAQGGGVAKEKRTTPPPAKITPPSSSSSEAAGLS). A chloroplast-targeting transit peptide spans 1–75 (MSPTAMSLTT…LGLTAARPAR (75 aa)). The segment covering 39 to 52 (TPPSSSSSEAAGLS) has biased composition (low complexity). Residues 164–184 (VMLLDLLVNFGFPLLFVASLL) form a helical membrane-spanning segment. 261-268 (GPPGTGKT) contributes to the ATP binding site. His-483 serves as a coordination point for Zn(2+). Glu-484 is a catalytic residue. Zn(2+) is bound by residues His-487 and Asp-562.

The protein in the N-terminal section; belongs to the AAA ATPase family. In the C-terminal section; belongs to the peptidase M41 family. Zn(2+) is required as a cofactor.

The protein localises to the plastid. It localises to the chloroplast thylakoid membrane. Probable ATP-dependent zinc metallopeptidase. The polypeptide is ATP-dependent zinc metalloprotease FTSH 6, chloroplastic (FTSH6) (Oryza sativa subsp. japonica (Rice)).